We begin with the raw amino-acid sequence, 86 residues long: Cell division topological specificity factor (86 aa).

This sequence belongs to the MinE family.

In terms of biological role, prevents the cell division inhibition by proteins MinC and MinD at internal division sites while permitting inhibition at polar sites. This ensures cell division at the proper site by restricting the formation of a division septum at the midpoint of the long axis of the cell. The polypeptide is Cell division topological specificity factor (Stenotrophomonas maltophilia (strain K279a)).